The following is a 294-amino-acid chain: tRNA dimethylallyltransferase (294 aa).

ATP is bound at residue 10 to 17; the sequence is GPTAVGKT. 12–17 contributes to the substrate binding site; the sequence is TAVGKT. An interaction with substrate tRNA region spans residues 35-38; it reads DSQQ.

Belongs to the IPP transferase family. Monomer. The cofactor is Mg(2+).

The catalysed reaction is adenosine(37) in tRNA + dimethylallyl diphosphate = N(6)-dimethylallyladenosine(37) in tRNA + diphosphate. Its function is as follows. Catalyzes the transfer of a dimethylallyl group onto the adenine at position 37 in tRNAs that read codons beginning with uridine, leading to the formation of N6-(dimethylallyl)adenosine (i(6)A). In Streptococcus suis (strain 05ZYH33), this protein is tRNA dimethylallyltransferase.